The primary structure comprises 420 residues: MRSHLVKPGSVYDGIEPGELGETTESVQDRVRQLESRNSFLEEQCSQIESEKRYLENQKIKYEREIRKLQSELDRMKTSPLIIGTVIDVIKNDRIIVRSSNGPQFLVNVSQYIDEKKLLPGAKVALNQHTLAIAEVIPSTEEPFVAAMEVIESVEVDYDQIGGLDEQIQELQEAVELPLTSPERFARIGIEPPKGVLLYGLPGTGKTLLAKAVAHRTNATFIRVVGSELVQKYIGDGSKLVREIFEMARKKAPSIIFIDELDSIAARRLNETTGADREVQRTLMQLLAEMDGFDKRKNIRIIAATNRPDVLDPAILRPGRFDRLVHVPMPGIEARGKILKIHCEKMTLAEDIDFKKLAKATEGMSGADLKAIATEAGMFAVRRDKELVEMEEFLEAVEKVSMAADTQKMMPSNLPETMFV.

A disordered region spans residues 1–25; sequence MRSHLVKPGSVYDGIEPGELGETTE. A coiled-coil region spans residues 22–79; it reads ETTESVQDRVRQLESRNSFLEEQCSQIESEKRYLENQKIKYEREIRKLQSELDRMKTS. ATP-binding positions include 203–208 and His-342; that span reads GTGKTL. Positions 418-420 are docks into pockets in the proteasome alpha-ring to cause gate opening; it reads MFV.

It belongs to the AAA ATPase family. As to quaternary structure, homohexamer. The hexameric complex has a two-ring architecture resembling a top hat that caps the 20S proteasome core at one or both ends. Upon ATP-binding, the C-terminus of PAN interacts with the alpha-rings of the proteasome core by binding to the intersubunit pockets.

It localises to the cytoplasm. Its function is as follows. ATPase which is responsible for recognizing, binding, unfolding and translocation of substrate proteins into the archaeal 20S proteasome core particle. Is essential for opening the gate of the 20S proteasome via an interaction with its C-terminus, thereby allowing substrate entry and access to the site of proteolysis. Thus, the C-termini of the proteasomal ATPase function like a 'key in a lock' to induce gate opening and therefore regulate proteolysis. Unfolding activity requires energy from ATP hydrolysis, whereas ATP binding alone promotes ATPase-20S proteasome association which triggers gate opening, and supports translocation of unfolded substrates. The polypeptide is Proteasome-activating nucleotidase (Methanosarcina mazei (strain ATCC BAA-159 / DSM 3647 / Goe1 / Go1 / JCM 11833 / OCM 88) (Methanosarcina frisia)).